We begin with the raw amino-acid sequence, 254 residues long: Cdc42 effector protein 3 (254 aa).

Residues 31-45 (ISPPLGDFRHTIHIG) form the CRIB domain. Tyrosine 63 bears the Phosphotyrosine mark. Residues serine 89, serine 108, and serine 144 each carry the phosphoserine modification. The segment at 165 to 205 (VHQGDTSWGSSGSGSQSSQGRDSHSSSLSEQSSDWPADDMF) is disordered. The span at 171-197 (SWGSSGSGSQSSQGRDSHSSSLSEQSS) shows a compositional bias: low complexity.

Belongs to the BORG/CEP family. In terms of assembly, interacts with RHOQ and CDC42, in a GTP-dependent manner, and with SEPT7.

Its subcellular location is the endomembrane system. The protein localises to the cytoplasm. It localises to the cytoskeleton. Probably involved in the organization of the actin cytoskeleton. May act downstream of CDC42 to induce actin filament assembly leading to cell shape changes. Induces pseudopodia formation in fibroblasts. The protein is Cdc42 effector protein 3 (Cdc42ep3) of Mus musculus (Mouse).